Consider the following 399-residue polypeptide: Glycerate 2-kinase (399 aa).

Position 48 (Lys48) interacts with substrate.

The protein belongs to the glycerate kinase type-1 family. Homodimer. Mg(2+) serves as cofactor. Requires Ni(2+) as cofactor. Mn(2+) is required as a cofactor. It depends on Co(2+) as a cofactor. The cofactor is Ca(2+). Zn(2+) serves as cofactor. Requires Sr(2+) as cofactor.

The catalysed reaction is (R)-glycerate + ATP = (2R)-2-phosphoglycerate + ADP + H(+). In terms of biological role, catalyzes the ATP-dependent phosphorylation of D-glycerate to 2-phosphoglycerate. It can also utilize GTP, CTP, UTP, ADP, AMP or pyrophosphate as phosphate donor. The chain is Glycerate 2-kinase (gck) from Sulfurisphaera tokodaii (strain DSM 16993 / JCM 10545 / NBRC 100140 / 7) (Sulfolobus tokodaii).